We begin with the raw amino-acid sequence, 429 residues long: MTDRFLASINAALTDSDPAIAGLIDQERQRQETHLELIASENFTSQAVMQAQGSVLTNKYAEGLPHKRYYGGCEHVDAIEELAIERAQRLFGAAWANVQPHSGAQANFAVFLALLQPGDTIMGMDLSHGGHLTHGSPVNVSGKWFKVVHYGVERDSQQLDMEAVRQLALKERPQLIICGYSAYPRTIDFAAFRSIADEVGAYLLADMAHIAGLVAAGVHPSPIAHCDVVTTTTHKTLRGPRGGLILCRDADFGRKFDKAVFPGSQGGPLEHVIAAKAVALGEALQPEFQVYSCQVVANAQVLAGRIQERGIAVVSGGTDNHLVLLDLRSIGMTGKVADLLVSEVNITANKNTVPFDPESPFVTSGLRLGTAALTTRGFDDEAFREVADVIADRLLKPQDESIKAQCLERVRQLCGRFPLYRDVLQPALA.

(6S)-5,6,7,8-tetrahydrofolate is bound by residues leucine 126 and 130 to 132 (GHL). At lysine 235 the chain carries N6-(pyridoxal phosphate)lysine. 359-361 (SPF) provides a ligand contact to (6S)-5,6,7,8-tetrahydrofolate.

This sequence belongs to the SHMT family. In terms of assembly, homodimer. The cofactor is pyridoxal 5'-phosphate.

The protein localises to the cytoplasm. It carries out the reaction (6R)-5,10-methylene-5,6,7,8-tetrahydrofolate + glycine + H2O = (6S)-5,6,7,8-tetrahydrofolate + L-serine. Its pathway is one-carbon metabolism; tetrahydrofolate interconversion. It functions in the pathway amino-acid biosynthesis; glycine biosynthesis; glycine from L-serine: step 1/1. Catalyzes the reversible interconversion of serine and glycine with tetrahydrofolate (THF) serving as the one-carbon carrier. This reaction serves as the major source of one-carbon groups required for the biosynthesis of purines, thymidylate, methionine, and other important biomolecules. Also exhibits THF-independent aldolase activity toward beta-hydroxyamino acids, producing glycine and aldehydes, via a retro-aldol mechanism. The polypeptide is Serine hydroxymethyltransferase (Prochlorococcus marinus (strain MIT 9313)).